Consider the following 433-residue polypeptide: MRQSHQLPLVGLLLFSFIPSQLCEICEVSEENYIRLKPLLNTMIQSNYNRGTSAVNVVLSLKLVGIQIQTLMQKMIQQIKYNVKSRLSDVSSGELALIILALGVCRNAEENLIYDYHLIDKLENKFQAEIENMEAHNGTPLTNYYQLSLDVLALCLFNGNYSTAEVVNHFTPENKNYYFGSQFSVDTGAMAVLALTCVKKSLINGQIKADEGSLKNISIYTKSLVEKILSEKKENGLIGNTFSTGEAMQALFVSSDYYNENDWNCQQTLNTVLTEISQGAFSNPNAAAQVLPALMGKTFLDINKDSSCVSASGNFNISADEPITVTPPDSQSYISVNYSVRINETYFTNVTVLNGSVFLSVMEKAQKMNDTIFGFTMEERSWGPYITCIQGLCANNNDRTYWELLSGGEPLSQGAGSYVVRNGENLEVRWSKY.

Positions 1-23 (MRQSHQLPLVGLLLFSFIPSQLC) are cleaved as a signal peptide. The segment at 24 to 310 (EICEVSEENY…DINKDSSCVS (287 aa)) is globular N-terminal alpha domain. Cystine bridges form between C26–C265, C105–C308, and C155–C197. 142–146 (TNYYQ) is a binding site for cyanocob(III)alamin. An N-linked (GlcNAc...) asparagine glycan is attached at N160. A cyanocob(III)alamin-binding site is contributed by D186. N216 is a glycosylation site (N-linked (GlcNAc...) asparagine). Cyanocob(III)alamin contacts are provided by N240 and Q289. The flexible linker stretch occupies residues 311 to 332 (ASGNFNISADEPITVTPPDSQS). N316, N337, N343, N349, N354, and N369 each carry an N-linked (GlcNAc...) asparagine glycan. A globular C-terminal beta domain region spans residues 333-433 (YISVNYSVRI…ENLEVRWSKY (101 aa)). 385 to 386 (YI) is a cyanocob(III)alamin binding site. A disulfide bond links C388 and C393. Cyanocob(III)alamin contacts are provided by residues 402–404 (WEL), L411, and Y433.

Belongs to the eukaryotic cobalamin transport proteins family. Contains about 30% carbohydrates. As to expression, produced by the salivary glands of the oral cavity, in response to ingestion of food. Major constituent of secondary granules in neutrophils.

It is found in the secreted. In terms of biological role, binds vitamin B12 with femtomolar affinity and protects it from the acidic environment of the stomach. In Homo sapiens (Human), this protein is Transcobalamin-1 (TCN1).